Here is a 283-residue protein sequence, read N- to C-terminus: Pantothenate synthetase (283 aa).

31 to 38 contacts ATP; it reads MGALHDGH. The Proton donor role is filled by His38. Gln62 provides a ligand contact to (R)-pantoate. Beta-alanine is bound at residue Gln62. 148 to 151 provides a ligand contact to ATP; that stretch reads GKKD. Position 154 (Gln154) interacts with (R)-pantoate. ATP contacts are provided by residues Val177 and 185-188; that span reads KSSR.

This sequence belongs to the pantothenate synthetase family. As to quaternary structure, homodimer.

Its subcellular location is the cytoplasm. The catalysed reaction is (R)-pantoate + beta-alanine + ATP = (R)-pantothenate + AMP + diphosphate + H(+). It participates in cofactor biosynthesis; (R)-pantothenate biosynthesis; (R)-pantothenate from (R)-pantoate and beta-alanine: step 1/1. Catalyzes the condensation of pantoate with beta-alanine in an ATP-dependent reaction via a pantoyl-adenylate intermediate. The sequence is that of Pantothenate synthetase from Staphylococcus aureus (strain MRSA252).